The following is a 65-amino-acid chain: Large ribosomal subunit protein bL35c (65 aa).

The segment at 18–50 (SSGKILRHKASKSHLLQKKSSKHRRHLSSTCQV) is disordered. The span at 22 to 44 (ILRHKASKSHLLQKKSSKHRRHL) shows a compositional bias: basic residues.

It belongs to the bacterial ribosomal protein bL35 family.

It localises to the plastid. Its subcellular location is the chloroplast. This Porphyra purpurea (Red seaweed) protein is Large ribosomal subunit protein bL35c.